The sequence spans 262 residues: Sulfur carrier protein FdhD (262 aa).

The active-site Cysteine persulfide intermediate is the Cys-105. Position 246–251 (246–251 (FVRKNR)) interacts with Mo-bis(molybdopterin guanine dinucleotide).

It belongs to the FdhD family.

It localises to the cytoplasm. Functionally, required for formate dehydrogenase (FDH) activity. Acts as a sulfur carrier protein that transfers sulfur from IscS to the molybdenum cofactor prior to its insertion into FDH. This Picrophilus torridus (strain ATCC 700027 / DSM 9790 / JCM 10055 / NBRC 100828 / KAW 2/3) protein is Sulfur carrier protein FdhD.